The chain runs to 479 residues: Small ribosomal subunit protein bS1 (479 aa).

4 S1 motif domains span residues Gly36–Lys105, Asp123–Arg188, Gly209–Lys277, and Gly294–Lys363. The tract at residues Thr429–Ala466 is disordered. The span at Ala437 to Gly460 shows a compositional bias: low complexity.

The protein belongs to the bacterial ribosomal protein bS1 family. As to quaternary structure, binds uncharacterized protein MSMEG_2731/MSMEI_2664.

Binds mRNA, facilitating recognition of most mRNAs by the 30S ribosomal subunit during translation initiation. Plays a role in trans-translation; binds tmRNA (the product of the ssrA gene). Binds very poorly to pyrazinoic acid (POA), the active form of the prodrug pyrazinamide (PZA); POA does not disrupt trans-translation in this organism. M.smegmatis is resistant to the antibiotic PZA. In trans-translation Ala-aminoacylated transfer-messenger RNA (tmRNA, product of the ssrA gene; the 2 termini fold to resemble tRNA(Ala) while it encodes a short internal open reading frame (the tag peptide)) acts like a tRNA, entering the A-site of the ribosome and displacing the stalled mRNA (which is subsequently degraded). The ribosome then switches to translate the ORF on the tmRNA, the nascent peptide is terminated with the 'tag peptide' encoded by the tmRNA and thus targeted for degradation. This Mycolicibacterium smegmatis (strain ATCC 700084 / mc(2)155) (Mycobacterium smegmatis) protein is Small ribosomal subunit protein bS1 (rpsA).